The chain runs to 395 residues: GTPase Obg (395 aa).

The Obg domain occupies 1–159 (MQFVDEASII…RNLRFEMKVM (159 aa)). Residues 128-147 (IHFKSSTNRAPRKTTPGTEG) form a disordered region. An OBG-type G domain is found at 160-333 (ADVGLLGVPN…LVQAAHRWLT (174 aa)). Residues 166–173 (GVPNAGKS), 191–195 (FTTLV), 213–216 (DVPG), 283–286 (NKLD), and 314–316 (SAI) contribute to the GTP site. Mg(2+) is bound by residues serine 173 and threonine 193. Over residues 340–368 (AEDETAFEHEREMRRRMEDEAVARAEARM) the composition is skewed to basic and acidic residues. The interval 340 to 395 (AEDETAFEHEREMRRRMEDEAVARAEARMSRKRKPAEDDDDDFDEDDYDVEVEYAP) is disordered. Positions 376 to 395 (EDDDDDFDEDDYDVEVEYAP) are enriched in acidic residues.

The protein belongs to the TRAFAC class OBG-HflX-like GTPase superfamily. OBG GTPase family. In terms of assembly, monomer. Requires Mg(2+) as cofactor.

It localises to the cytoplasm. Functionally, an essential GTPase which binds GTP, GDP and possibly (p)ppGpp with moderate affinity, with high nucleotide exchange rates and a fairly low GTP hydrolysis rate. Plays a role in control of the cell cycle, stress response, ribosome biogenesis and in those bacteria that undergo differentiation, in morphogenesis control. This chain is GTPase Obg, found in Chromohalobacter salexigens (strain ATCC BAA-138 / DSM 3043 / CIP 106854 / NCIMB 13768 / 1H11).